A 165-amino-acid polypeptide reads, in one-letter code: Protein NKG7 (165 aa).

4 helical membrane-spanning segments follow: residues 9–29, 61–81, 92–112, and 133–153; these read LLTS…NFWF, FCIL…MSCI, IVST…MTVY, and FYLG…SLGA.

The protein belongs to the PMP-22/EMP/MP20 family.

The protein localises to the cell membrane. The protein resides in the cytolytic granule membrane. Functionally, regulates cytotoxic granule exocytosis in effector lymphocytes, thus acting as a critical mediator of inflammation in a broad range of infectious and non-infectious diseases. Essential for cytotoxic degranulation of natural killer (NK) cells and CD8(+) T-cells and for the activation of CD4(+) T-cells following infection. Plays a critical role in CD8(+) T-cell and NK cell-mediated cytolysis of target cells and contributes to the cytolytic activity via the perforin/granzyme pathway by enhancing exocytosis of LAMP1-carrying lytic granules. Contributes to NK cell-mediated control of cancer metastasis. This chain is Protein NKG7 (NKG7), found in Bos taurus (Bovine).